A 426-amino-acid polypeptide reads, in one-letter code: Serine--tRNA ligase (426 aa).

233–235 provides a ligand contact to L-serine; sequence TAE. 264 to 266 lines the ATP pocket; it reads RRE. Glu287 serves as a coordination point for L-serine. 351–354 lines the ATP pocket; it reads EISS. L-serine is bound at residue Ser386.

The protein belongs to the class-II aminoacyl-tRNA synthetase family. Type-1 seryl-tRNA synthetase subfamily. As to quaternary structure, homodimer. The tRNA molecule binds across the dimer.

The protein resides in the cytoplasm. The catalysed reaction is tRNA(Ser) + L-serine + ATP = L-seryl-tRNA(Ser) + AMP + diphosphate + H(+). The enzyme catalyses tRNA(Sec) + L-serine + ATP = L-seryl-tRNA(Sec) + AMP + diphosphate + H(+). It participates in aminoacyl-tRNA biosynthesis; selenocysteinyl-tRNA(Sec) biosynthesis; L-seryl-tRNA(Sec) from L-serine and tRNA(Sec): step 1/1. Functionally, catalyzes the attachment of serine to tRNA(Ser). Is also able to aminoacylate tRNA(Sec) with serine, to form the misacylated tRNA L-seryl-tRNA(Sec), which will be further converted into selenocysteinyl-tRNA(Sec). This is Serine--tRNA ligase from Prochlorococcus marinus (strain NATL2A).